We begin with the raw amino-acid sequence, 179 residues long: Lebocin-4 (179 aa).

The first 16 residues, 1 to 16 (MYKFLVFSSVLVLFFA), serve as a signal peptide directing secretion. Residues 17–120 (QASCQRFIQP…RPIESHRNTR (104 aa)) constitute a propeptide that is removed on maturation. A glycan (O-linked (GalNAc...) threonine) is linked at Thr135. Positions 153–179 (RRHASDDQEELRHHNEHFLIPRDILQD) are excised as a propeptide.

The protein belongs to the lebocin family. Post-translationally, O-glycosylation is important for the antibacterial activity of lebocin. In terms of tissue distribution, hemolymph. Produced in fat body.

It localises to the secreted. Its function is as follows. Antibacterial peptide. The polypeptide is Lebocin-4 (LEB4) (Bombyx mori (Silk moth)).